The chain runs to 254 residues: Stem 28 kDa glycoprotein (254 aa).

An N-terminal signal peptide occupies residues 1-21 (MKMKVLVFFVATILVAWQCHA). The propeptide occupies 22–34 (YDMFPLRMNTGYG). The N-linked (GlcNAc...) asparagine glycan is linked to asparagine 129.

This sequence belongs to the APS1/VSP family. As to expression, accumulates in the stems of developing soybean seedlings.

In terms of biological role, may function as somatic storage protein during early seedling development. This chain is Stem 28 kDa glycoprotein (VSPA), found in Glycine max (Soybean).